Reading from the N-terminus, the 458-residue chain is MGKEKTHVNVVVIGHVDSGKSTTTGHLIYKCGGIDKRTIEKFEKEAAELGKGSFKYAWVLDKLKAERERGITIDIALWKFETPKYHVTVIDAPGHRDFIKNMITGTSQADCAILIIAGGTGEFEAGISKDGQTREHALLAYTLGVRQLIVAVNKMDSVKWDKNRFEEIIKETSNFVKKVGYNPKTVPFVPISGWNGDNMIEASTNCPWYKGWEKETKAGKSTGKTLLEAIDAIEPPQRPTDKPLRLPLQDVYKIGGIGTVPVGRVETGIIKAGMVVTFAPAGVTTEVKSVEMHHEQLVEGVPGDNVGFNVKNVSVKEIRRGNVCGDSKNDPPKGCDSFTAQVIVLNHPGQISAGYSPVLDCHTAHIACKFDTLLEKIDRRTGKKMEDNPKFVKSGDASIVKMVPSKPMCVEAFTDYPPLGRFAVRDMRQTVAVGVIKSVEKSDKAGKVTKAAQKAAKK.

Gly2 carries the n,N,N-trimethylglycine modification. Lys3 carries the N6,N6-dimethyllysine; alternate modification. Residue Lys3 is modified to N6-methyllysine; alternate. Residues 5–240 enclose the tr-type G domain; the sequence is KTHVNVVVIG…DAIEPPQRPT (236 aa). Residues 14–21 are G1; it reads GHVDSGKS. 14-21 serves as a coordination point for GTP; it reads GHVDSGKS. Lys30 carries the post-translational modification N6-methyllysine. Residues 70-74 are G2; sequence GITID. Lys79 bears the N6,N6,N6-trimethyllysine mark. A G3 region spans residues 91-94; that stretch reads DAPG. GTP is bound by residues 91–95 and 153–156; these read DAPGH and NKMD. Residues 153 to 156 form a G4 region; it reads NKMD. Residues 192 to 194 form a G5 region; the sequence is SGW. Lys316 carries the post-translational modification N6,N6-dimethyllysine; alternate. Lys316 carries the post-translational modification N6-methyllysine; alternate. Lys390 carries the N6-methyllysine modification.

Belongs to the TRAFAC class translation factor GTPase superfamily. Classic translation factor GTPase family. EF-Tu/EF-1A subfamily.

It localises to the cytoplasm. Its pathway is protein biosynthesis; polypeptide chain elongation. In terms of biological role, this protein promotes the GTP-dependent binding of aminoacyl-tRNA to the A-site of ribosomes during protein biosynthesis. The sequence is that of Elongation factor 1-alpha (TEF1) from Meyerozyma guilliermondii (strain ATCC 6260 / CBS 566 / DSM 6381 / JCM 1539 / NBRC 10279 / NRRL Y-324) (Yeast).